The chain runs to 693 residues: Heat shock protein homolog SSE1 (693 aa).

The interval 665–693 (LAEKLAAQRKAESEKKESKADAEGDVELD) is disordered. Positions 673-686 (RKAESEKKESKADA) are enriched in basic and acidic residues.

This sequence belongs to the heat shock protein 70 family.

It localises to the cytoplasm. In Lachancea kluyveri (strain ATCC 58438 / CBS 3082 / BCRC 21498 / NBRC 1685 / JCM 7257 / NCYC 543 / NRRL Y-12651) (Yeast), this protein is Heat shock protein homolog SSE1 (SSE1).